We begin with the raw amino-acid sequence, 110 residues long: uncharacterized protein (110 aa).

The next 3 helical transmembrane spans lie at Val-32–Pro-52, Tyr-57–Ile-77, and Phe-90–Ile-110.

It is found in the membrane. Functionally, may play a role in proper chromosome segregation. Suppresses the high-frequency loss of mini-chromosomes when overexpressed, and this suppression is completely dependent on silencing protein SIR4. This is an uncharacterized protein from Saccharomyces cerevisiae (strain ATCC 204508 / S288c) (Baker's yeast).